We begin with the raw amino-acid sequence, 402 residues long: Diaminopimelate decarboxylase (402 aa).

Residue K45 is modified to N6-(pyridoxal phosphate)lysine. Pyridoxal 5'-phosphate-binding positions include G224 and 259 to 262 (EPGR). Positions 262, 298, and 302 each coordinate substrate. The active-site Proton donor is the C327. Substrate-binding residues include E328 and Y356. Y356 serves as a coordination point for pyridoxal 5'-phosphate.

Belongs to the Orn/Lys/Arg decarboxylase class-II family. LysA subfamily. Homodimer. It depends on pyridoxal 5'-phosphate as a cofactor.

The enzyme catalyses meso-2,6-diaminopimelate + H(+) = L-lysine + CO2. It functions in the pathway amino-acid biosynthesis; L-lysine biosynthesis via DAP pathway; L-lysine from DL-2,6-diaminopimelate: step 1/1. Its function is as follows. Specifically catalyzes the decarboxylation of meso-diaminopimelate (meso-DAP) to L-lysine. This is Diaminopimelate decarboxylase from Campylobacter jejuni subsp. jejuni serotype O:2 (strain ATCC 700819 / NCTC 11168).